We begin with the raw amino-acid sequence, 309 residues long: Ribosomal RNA small subunit methyltransferase H (309 aa).

Residues 33–35 (GGH), Asp53, Phe79, Asp100, and Gln107 contribute to the S-adenosyl-L-methionine site.

The protein belongs to the methyltransferase superfamily. RsmH family.

Its subcellular location is the cytoplasm. The catalysed reaction is cytidine(1402) in 16S rRNA + S-adenosyl-L-methionine = N(4)-methylcytidine(1402) in 16S rRNA + S-adenosyl-L-homocysteine + H(+). In terms of biological role, specifically methylates the N4 position of cytidine in position 1402 (C1402) of 16S rRNA. In Clostridium botulinum (strain Loch Maree / Type A3), this protein is Ribosomal RNA small subunit methyltransferase H.